Reading from the N-terminus, the 196-residue chain is Probable thymidylate kinase (196 aa).

7 to 14 (GIDGAGKT) lines the ATP pocket.

Belongs to the thymidylate kinase family.

The enzyme catalyses dTMP + ATP = dTDP + ADP. The chain is Probable thymidylate kinase (tmk) from Archaeoglobus fulgidus (strain ATCC 49558 / DSM 4304 / JCM 9628 / NBRC 100126 / VC-16).